The following is a 513-amino-acid chain: Histidine ammonia-lyase (513 aa).

The segment at residues 144–146 (ASG) is a cross-link (5-imidazolinone (Ala-Gly)). Serine 145 is modified (2,3-didehydroalanine (Ser)).

Belongs to the PAL/histidase family. In terms of processing, contains an active site 4-methylidene-imidazol-5-one (MIO), which is formed autocatalytically by cyclization and dehydration of residues Ala-Ser-Gly.

The protein resides in the cytoplasm. The catalysed reaction is L-histidine = trans-urocanate + NH4(+). It participates in amino-acid degradation; L-histidine degradation into L-glutamate; N-formimidoyl-L-glutamate from L-histidine: step 1/3. This is Histidine ammonia-lyase from Streptococcus gordonii (strain Challis / ATCC 35105 / BCRC 15272 / CH1 / DL1 / V288).